Here is a 328-residue protein sequence, read N- to C-terminus: Gonadotropin-releasing hormone receptor (328 aa).

Over 1 to 38 the chain is Extracellular; it reads MANSASPEQNQNHCSAINSSILLTQGNLPTLTLSGKIR. Asn-18 is a glycosylation site (N-linked (GlcNAc...) asparagine). Residues 39–58 form a helical membrane-spanning segment; it reads VTVTFFLFLLSTAFNASFLL. Over 59–77 the chain is Cytoplasmic; it reads KLQKWTQRKEKGKKLSRMK. The chain crosses the membrane as a helical span at residues 78–97; that stretch reads VLLKHLTLANLLETLIVMPL. The Extracellular portion of the chain corresponds to 98–115; sequence DGMWNITVQWYAGEFLCK. An N-linked (GlcNAc...) asparagine glycan is attached at Asn-102. A disulfide bridge connects residues Cys-114 and Cys-196. Residues 116–137 form a helical membrane-spanning segment; that stretch reads VLSYLKLFSMYAPAFMMVVISL. Residues 138–164 lie on the Cytoplasmic side of the membrane; sequence DRSLAITRPLAVKSNSRLGRFMIGLAW. Residues 165 to 184 form a helical membrane-spanning segment; it reads LLSSIFAGPQLYIFRMIHLA. The Extracellular segment spans residues 185–212; that stretch reads DSSGQTEGFSQCVTHGSFPQWWHQAFYN. A helical membrane pass occupies residues 213–232; that stretch reads FFTFSCLFIIPLLIMLICNA. The Cytoplasmic segment spans residues 233 to 281; that stretch reads KIMFTLTRVLQQDPHNLQLNQSKNNIPRARLRTLKMTVAFAASFIVCWT. Residues 282-300 traverse the membrane as a helical segment; sequence PYYVLGIWYWFDPEMVNRV. Residues 301-306 are Extracellular-facing; sequence SDPVNH. A helical membrane pass occupies residues 307 to 326; that stretch reads FFFLFAFLNPCFDPLIYGYF. At 327–328 the chain is on the cytoplasmic side; sequence SL.

The protein belongs to the G-protein coupled receptor 1 family. In terms of tissue distribution, pituitary gland.

The protein localises to the cell membrane. Functionally, receptor for gonadotropin releasing hormone (GnRH) that mediates the action of GnRH to stimulate the secretion of the gonadotropic hormones luteinizing hormone (LH) and follicle-stimulating hormone (FSH). This receptor mediates its action by association with G-proteins that activate a phosphatidylinositol-calcium second messenger system. This Sus scrofa (Pig) protein is Gonadotropin-releasing hormone receptor (GNRHR).